The chain runs to 252 residues: uncharacterized protein (252 aa).

The 235-residue stretch at 13–247 folds into the ABC transporter domain; the sequence is ITLENVNKWY…PKSERTRAFL (235 aa). 45–52 contacts ATP; that stretch reads GPSGSGKS.

Belongs to the ABC transporter superfamily.

It localises to the cell inner membrane. Probably part of a binding-protein-dependent transport system YdhWXYZ for an amino acid. Probably responsible for energy coupling to the transport system. This is an uncharacterized protein from Escherichia coli (strain K12).